We begin with the raw amino-acid sequence, 558 residues long: Dihydroxy-acid dehydratase (558 aa).

Asp-78 provides a ligand contact to Mg(2+). [2Fe-2S] cluster is bound at residue Cys-119. The Mg(2+) site is built by Asp-120 and Lys-121. An N6-carboxylysine modification is found at Lys-121. Residue Cys-191 participates in [2Fe-2S] cluster binding. Glu-443 contacts Mg(2+). The active-site Proton acceptor is the Ser-469.

It belongs to the IlvD/Edd family. Homodimer. [2Fe-2S] cluster is required as a cofactor. Mg(2+) serves as cofactor.

It catalyses the reaction (2R)-2,3-dihydroxy-3-methylbutanoate = 3-methyl-2-oxobutanoate + H2O. The catalysed reaction is (2R,3R)-2,3-dihydroxy-3-methylpentanoate = (S)-3-methyl-2-oxopentanoate + H2O. The protein operates within amino-acid biosynthesis; L-isoleucine biosynthesis; L-isoleucine from 2-oxobutanoate: step 3/4. It functions in the pathway amino-acid biosynthesis; L-valine biosynthesis; L-valine from pyruvate: step 3/4. Functions in the biosynthesis of branched-chain amino acids. Catalyzes the dehydration of (2R,3R)-2,3-dihydroxy-3-methylpentanoate (2,3-dihydroxy-3-methylvalerate) into 2-oxo-3-methylpentanoate (2-oxo-3-methylvalerate) and of (2R)-2,3-dihydroxy-3-methylbutanoate (2,3-dihydroxyisovalerate) into 2-oxo-3-methylbutanoate (2-oxoisovalerate), the penultimate precursor to L-isoleucine and L-valine, respectively. In Solidesulfovibrio magneticus (strain ATCC 700980 / DSM 13731 / RS-1) (Desulfovibrio magneticus), this protein is Dihydroxy-acid dehydratase.